Consider the following 504-residue polypeptide: Maturase K (504 aa).

It belongs to the intron maturase 2 family. MatK subfamily.

The protein localises to the plastid. It is found in the chloroplast. In terms of biological role, usually encoded in the trnK tRNA gene intron. Probably assists in splicing its own and other chloroplast group II introns. This is Maturase K from Arabidopsis lyrata (Lyre-leaved rock-cress).